The primary structure comprises 156 residues: Cyanate hydratase (156 aa).

Residues Arg-96, Glu-99, and Ser-122 contribute to the active site.

It belongs to the cyanase family.

It carries out the reaction cyanate + hydrogencarbonate + 3 H(+) = NH4(+) + 2 CO2. Its function is as follows. Catalyzes the reaction of cyanate with bicarbonate to produce ammonia and carbon dioxide. The protein is Cyanate hydratase of Burkholderia vietnamiensis (strain G4 / LMG 22486) (Burkholderia cepacia (strain R1808)).